Reading from the N-terminus, the 378-residue chain is Flap endonuclease 1 (378 aa).

Residues M1–R102 are N-domain. Position 19 is a symmetric dimethylarginine; by PRMT5 (R19). D34 is a binding site for Mg(2+). 2 residues coordinate DNA: R47 and R69. An N6-acetyllysine modification is found at K78. Residue D84 participates in Mg(2+) binding. Symmetric dimethylarginine; by PRMT5 is present on residues R98 and R102. The I-domain stretch occupies residues E120 to H251. Residues E156, E158, D177, and D179 each coordinate Mg(2+). A DNA-binding site is contributed by E156. S185 carries the phosphoserine; by CDK2 modification. R190 carries the post-translational modification Symmetric dimethylarginine; by PRMT5. A Phosphoserine modification is found at S195. DNA contacts are provided by G229 and D231. D231 is a binding site for Mg(2+). A phosphoserine mark is found at S253, S291, and S333. The interval R325–K378 is disordered. T334 carries the post-translational modification Phosphothreonine. The interval T334 to F342 is interaction with PCNA. Residues K352, K373, and K378 each carry the N6-acetyllysine modification. Residues P361 to K378 show a composition bias toward basic residues.

It belongs to the XPG/RAD2 endonuclease family. FEN1 subfamily. In terms of assembly, interacts with PCNA. Three molecules of FEN1 bind to one PCNA trimer with each molecule binding to one PCNA monomer. PCNA stimulates the nuclease activity without altering cleavage specificity. The C-terminal domain binds EP300; can bind simultaneously to both PCNA and EP300. Interacts with DDX11; this interaction is direct and increases flap endonuclease activity of FEN1. Interacts with WDR4; regulating its endonuclease activity. Interacts with POLB. Mg(2+) serves as cofactor. In terms of processing, acetylated by EP300. Acetylation inhibits both endonuclease and exonuclease activity. Acetylation also reduces DNA-binding activity but does not affect interaction with PCNA or EP300. Phosphorylation upon DNA damage induces relocalization to the nuclear plasma. Phosphorylation at Ser-185 by CDK2 occurs during late S-phase and results in dissociation from PCNA. Post-translationally, methylation at Arg-190 by PRMT5 impedes Ser-185 phosphorylation and increases interaction with PCNA.

It localises to the nucleus. The protein resides in the nucleolus. It is found in the nucleoplasm. Its subcellular location is the mitochondrion. Functionally, structure-specific nuclease with 5'-flap endonuclease and 5'-3' exonuclease activities involved in DNA replication and repair. During DNA replication, cleaves the 5'-overhanging flap structure that is generated by displacement synthesis when DNA polymerase encounters the 5'-end of a downstream Okazaki fragment. It enters the flap from the 5'-end and then tracks to cleave the flap base, leaving a nick for ligation. Also involved in the long patch base excision repair (LP-BER) pathway, by cleaving within the apurinic/apyrimidinic (AP) site-terminated flap. Acts as a genome stabilization factor that prevents flaps from equilibrating into structures that lead to duplications and deletions. Also possesses 5'-3' exonuclease activity on nicked or gapped double-stranded DNA, and exhibits RNase H activity. Also involved in replication and repair of rDNA and in repairing mitochondrial DNA. The protein is Flap endonuclease 1 of Mus musculus (Mouse).